The following is a 352-amino-acid chain: Probable protein kinase DDB_G0291842 (352 aa).

A disordered region spans residues 1 to 57; the sequence is MRPLPDQSAFEDKSELVSKKQKNEDENNENRSPETPRTPKVCPKTPTKTPLRTPTKN. Basic and acidic residues predominate over residues 10-34; it reads FEDKSELVSKKQKNEDENNENRSPE. Residues 38-56 show a composition bias toward low complexity; it reads TPKVCPKTPTKTPLRTPTK. Residues 77–331 enclose the Protein kinase domain; that stretch reads FEYINQIGEG…IQSLLKYDKL (255 aa). Residues 83–91 and lysine 106 each bind ATP; that span reads IGEGSFAKV. Residue aspartate 207 is the Proton acceptor of the active site. Asparagine 212 and aspartate 225 together coordinate Mg(2+).

The protein belongs to the protein kinase superfamily. Ser/Thr protein kinase family. WEE1 subfamily.

It carries out the reaction L-seryl-[protein] + ATP = O-phospho-L-seryl-[protein] + ADP + H(+). The catalysed reaction is L-threonyl-[protein] + ATP = O-phospho-L-threonyl-[protein] + ADP + H(+). This is Probable protein kinase DDB_G0291842 from Dictyostelium discoideum (Social amoeba).